Reading from the N-terminus, the 64-residue chain is UPF0370 protein YE1145 (64 aa).

The helical transmembrane segment at 3–23 threads the bilayer; it reads WLADYWWVVLIILVGMILNGI. Residues 36 to 64 are disordered; the sequence is SNKPEIPPHRDNNAQWDDDDDWPDKDKKK.

Belongs to the UPF0370 family.

It localises to the cell membrane. The polypeptide is UPF0370 protein YE1145 (Yersinia enterocolitica serotype O:8 / biotype 1B (strain NCTC 13174 / 8081)).